Here is a 518-residue protein sequence, read N- to C-terminus: UPF0288 protein Mbar_A0706 (518 aa).

It belongs to the UPF0288 family.

In Methanosarcina barkeri (strain Fusaro / DSM 804), this protein is UPF0288 protein Mbar_A0706.